We begin with the raw amino-acid sequence, 82 residues long: Large ribosomal subunit protein uL23 (82 aa).

Belongs to the universal ribosomal protein uL23 family. Part of the 50S ribosomal subunit. Contacts protein L29.

In terms of biological role, binds to 23S rRNA. One of the proteins that surrounds the polypeptide exit tunnel on the outside of the ribosome. This Natronomonas pharaonis (strain ATCC 35678 / DSM 2160 / CIP 103997 / JCM 8858 / NBRC 14720 / NCIMB 2260 / Gabara) (Halobacterium pharaonis) protein is Large ribosomal subunit protein uL23.